Here is a 234-residue protein sequence, read N- to C-terminus: Sugar fermentation stimulation protein A (234 aa).

Residues 201 to 220 constitute a DNA-binding region (H-T-H motif); that stretch reads LLSEAQNKGVEVLAYKAELS.

The protein belongs to the SfsA family.

In terms of biological role, binds to DNA non-specifically. Could be a regulatory factor involved in maltose metabolism. This chain is Sugar fermentation stimulation protein A, found in Salmonella agona (strain SL483).